Consider the following 373-residue polypeptide: Histidinol-phosphate aminotransferase 2 (373 aa).

The residue at position 229 (lysine 229) is an N6-(pyridoxal phosphate)lysine.

This sequence belongs to the class-II pyridoxal-phosphate-dependent aminotransferase family. Histidinol-phosphate aminotransferase subfamily. In terms of assembly, homodimer. Pyridoxal 5'-phosphate is required as a cofactor.

It catalyses the reaction L-histidinol phosphate + 2-oxoglutarate = 3-(imidazol-4-yl)-2-oxopropyl phosphate + L-glutamate. Its pathway is amino-acid biosynthesis; L-histidine biosynthesis; L-histidine from 5-phospho-alpha-D-ribose 1-diphosphate: step 7/9. The polypeptide is Histidinol-phosphate aminotransferase 2 (Hydrogenovibrio crunogenus (strain DSM 25203 / XCL-2) (Thiomicrospira crunogena)).